The primary structure comprises 104 residues: V-type ATP synthase subunit F (104 aa).

The protein belongs to the V-ATPase F subunit family.

Functionally, produces ATP from ADP in the presence of a proton gradient across the membrane. The protein is V-type ATP synthase subunit F (atpF) of Thermus thermophilus (strain ATCC 27634 / DSM 579 / HB8).